The chain runs to 126 residues: Holo-[acyl-carrier-protein] synthase (126 aa).

Mg(2+) contacts are provided by aspartate 9 and glutamate 58.

This sequence belongs to the P-Pant transferase superfamily. AcpS family. It depends on Mg(2+) as a cofactor.

It localises to the cytoplasm. It catalyses the reaction apo-[ACP] + CoA = holo-[ACP] + adenosine 3',5'-bisphosphate + H(+). In terms of biological role, transfers the 4'-phosphopantetheine moiety from coenzyme A to a Ser of acyl-carrier-protein. The polypeptide is Holo-[acyl-carrier-protein] synthase (Klebsiella pneumoniae subsp. pneumoniae (strain ATCC 700721 / MGH 78578)).